The chain runs to 317 residues: Beta-ketoacyl-[acyl-carrier-protein] synthase III (317 aa).

Active-site residues include cysteine 112 and histidine 244. The interval 245-249 (QANLR) is ACP-binding. Asparagine 274 is a catalytic residue.

The protein belongs to the thiolase-like superfamily. FabH family. In terms of assembly, homodimer.

It is found in the cytoplasm. The enzyme catalyses malonyl-[ACP] + acetyl-CoA + H(+) = 3-oxobutanoyl-[ACP] + CO2 + CoA. The protein operates within lipid metabolism; fatty acid biosynthesis. Functionally, catalyzes the condensation reaction of fatty acid synthesis by the addition to an acyl acceptor of two carbons from malonyl-ACP. Catalyzes the first condensation reaction which initiates fatty acid synthesis and may therefore play a role in governing the total rate of fatty acid production. Possesses both acetoacetyl-ACP synthase and acetyl transacylase activities. Its substrate specificity determines the biosynthesis of branched-chain and/or straight-chain of fatty acids. The protein is Beta-ketoacyl-[acyl-carrier-protein] synthase III of Shigella dysenteriae serotype 1 (strain Sd197).